Here is a 469-residue protein sequence, read N- to C-terminus: Keratin, type I cytoskeletal 26 (469 aa).

The segment at 1-82 (MSFRLSSGSR…ENEHGLLPGN (82 aa)) is head. The segment at 83–118 (EKVTLQNLNDRLASYLDHVCTLEEANADLEQKIKGW) is coil 1A. The region spanning 83–398 (EKVTLQNLND…KLIDGEGRKS (316 aa)) is the IF rod domain. Residues 119 to 140 (YEKYGPGSGRQLAYDCSKYFSV) are linker 1. The segment at 141–232 (TEDLKRQIIS…KNHQEEMKVM (92 aa)) is coil 1B. The segment at 233-255 (QGAAGGNVNVEINAAPGVDLTVL) is linker 12. The segment at 256-394 (LNNMRAEYED…EMYCKLIDGE (139 aa)) is coil 2. A tail region spans residues 395 to 465 (GRKSKSTYCK…NITMEQRLPS (71 aa)). Disordered regions lie at residues 398–421 (SKST…KDSK) and 450–469 (KSSK…KVPQ). Residues 405–421 (SEGRGPKNSENQVKDSK) show a composition bias toward basic and acidic residues.

Belongs to the intermediate filament family. As to quaternary structure, heterotetramer of two type I and two type II keratins.

This chain is Keratin, type I cytoskeletal 26, found in Bos taurus (Bovine).